The primary structure comprises 156 residues: Small ribosomal subunit protein uS11 (156 aa).

The tract at residues 1 to 27 (MSEKEQKEVEAKESSGKAEERRETREK) is disordered.

Belongs to the universal ribosomal protein uS11 family. In terms of assembly, part of the 30S ribosomal subunit.

Located on the platform of the 30S subunit. The sequence is that of Small ribosomal subunit protein uS11 from Thermofilum pendens (strain DSM 2475 / Hrk 5).